The sequence spans 188 residues: MRVIASSIRKGNVLEQDGKLYVVLSAENIHPGKGTPVSQIEMRRISDGVKISERYKTTDHVEKVTIEERNYSFLYEDGEGFHFMEPESYDQVQVTKDVVGSAAPYLQEGMVVKLSMHDTTAVAITLPQRATLEVVDTEPVTKGQTASSSYKPAVLSNGVRTQVPPHIGTGTRIVVLTEDGSYVERAKD.

Belongs to the elongation factor P family.

The protein resides in the cytoplasm. The protein operates within protein biosynthesis; polypeptide chain elongation. Its function is as follows. Involved in peptide bond synthesis. Stimulates efficient translation and peptide-bond synthesis on native or reconstituted 70S ribosomes in vitro. Probably functions indirectly by altering the affinity of the ribosome for aminoacyl-tRNA, thus increasing their reactivity as acceptors for peptidyl transferase. This is Elongation factor P from Rhodopseudomonas palustris (strain TIE-1).